A 239-amino-acid polypeptide reads, in one-letter code: Norbelladine 4'-O-methyltransferase 4 (239 aa).

Residues Val55, Glu77, 79 to 80, Ser85, Asp103, and Ala132 contribute to the S-adenosyl-L-methionine site; that span reads GV. Residue Asp155 participates in a divalent metal cation binding. Asp157 is a binding site for S-adenosyl-L-methionine. A divalent metal cation is bound by residues Asp181 and Asn182.

It belongs to the class I-like SAM-binding methyltransferase superfamily. Cation-dependent O-methyltransferase family. It depends on Mg(2+) as a cofactor.

The catalysed reaction is norbelladine + S-adenosyl-L-methionine = 4'-O-methylnorbelladine + S-adenosyl-L-homocysteine + H(+). Its pathway is alkaloid biosynthesis. 4'-O-methyltransferase converting norbelladine to 4'-O-methylnorbelladine. 4'-O-methylnorbelladine is a precursor to all Amaryllidaceae alkaloids such as galanthamine, lycorine and haemanthamine, and including haemanthamine- and crinamine-type alkaloids, promising anticancer agents. This Narcissus aff. pseudonarcissus MK-2014 (Daffodil) protein is Norbelladine 4'-O-methyltransferase 4.